A 129-amino-acid polypeptide reads, in one-letter code: Small ribosomal subunit protein uS11 (129 aa).

The protein belongs to the universal ribosomal protein uS11 family. As to quaternary structure, part of the 30S ribosomal subunit. Interacts with proteins S7 and S18. Binds to IF-3.

Located on the platform of the 30S subunit, it bridges several disparate RNA helices of the 16S rRNA. Forms part of the Shine-Dalgarno cleft in the 70S ribosome. In Macrococcus caseolyticus (strain JCSC5402) (Macrococcoides caseolyticum), this protein is Small ribosomal subunit protein uS11.